Consider the following 237-residue polypeptide: Sugar fermentation stimulation protein homolog (237 aa).

Belongs to the SfsA family.

This Pseudomonas syringae pv. syringae (strain B728a) protein is Sugar fermentation stimulation protein homolog.